The chain runs to 275 residues: 2,3,4,5-tetrahydropyridine-2,6-dicarboxylate N-succinyltransferase (275 aa).

Residues arginine 106 and aspartate 143 each coordinate substrate.

The protein belongs to the transferase hexapeptide repeat family. In terms of assembly, homotrimer.

It localises to the cytoplasm. The catalysed reaction is (S)-2,3,4,5-tetrahydrodipicolinate + succinyl-CoA + H2O = (S)-2-succinylamino-6-oxoheptanedioate + CoA. It functions in the pathway amino-acid biosynthesis; L-lysine biosynthesis via DAP pathway; LL-2,6-diaminopimelate from (S)-tetrahydrodipicolinate (succinylase route): step 1/3. This is 2,3,4,5-tetrahydropyridine-2,6-dicarboxylate N-succinyltransferase from Cupriavidus pinatubonensis (strain JMP 134 / LMG 1197) (Cupriavidus necator (strain JMP 134)).